The primary structure comprises 660 residues: Bifunctional polymyxin resistance protein ArnA (660 aa).

The interval 1-304 (MKAVVFAYHD…TLGLVAGAII (304 aa)) is formyltransferase ArnAFT. The active-site Proton donor; for formyltransferase activity is the histidine 104. Residues arginine 114 and 136–140 (VSRAD) each bind (6R)-10-formyltetrahydrofolate. Positions 314–660 (RRTRVLILGV…KTVELTEPQA (347 aa)) are dehydrogenase ArnADH. NAD(+)-binding positions include aspartate 347 and 368-369 (DI). Residues alanine 393, tyrosine 398, and 432–433 (TS) contribute to the UDP-alpha-D-glucuronate site. Glutamate 434 functions as the Proton acceptor; for decarboxylase activity in the catalytic mechanism. Residues arginine 460, asparagine 492, 526–535 (KLIDGGRQKR), and tyrosine 613 each bind UDP-alpha-D-glucuronate. Residue arginine 619 is the Proton donor; for decarboxylase activity of the active site.

The protein in the N-terminal section; belongs to the Fmt family. UDP-L-Ara4N formyltransferase subfamily. In the C-terminal section; belongs to the NAD(P)-dependent epimerase/dehydratase family. UDP-glucuronic acid decarboxylase subfamily. Homohexamer, formed by a dimer of trimers.

It catalyses the reaction UDP-alpha-D-glucuronate + NAD(+) = UDP-beta-L-threo-pentopyranos-4-ulose + CO2 + NADH. The catalysed reaction is UDP-4-amino-4-deoxy-beta-L-arabinose + (6R)-10-formyltetrahydrofolate = UDP-4-deoxy-4-formamido-beta-L-arabinose + (6S)-5,6,7,8-tetrahydrofolate + H(+). Its pathway is nucleotide-sugar biosynthesis; UDP-4-deoxy-4-formamido-beta-L-arabinose biosynthesis; UDP-4-deoxy-4-formamido-beta-L-arabinose from UDP-alpha-D-glucuronate: step 1/3. It participates in nucleotide-sugar biosynthesis; UDP-4-deoxy-4-formamido-beta-L-arabinose biosynthesis; UDP-4-deoxy-4-formamido-beta-L-arabinose from UDP-alpha-D-glucuronate: step 3/3. The protein operates within bacterial outer membrane biogenesis; lipopolysaccharide biosynthesis. Functionally, bifunctional enzyme that catalyzes the oxidative decarboxylation of UDP-glucuronic acid (UDP-GlcUA) to UDP-4-keto-arabinose (UDP-Ara4O) and the addition of a formyl group to UDP-4-amino-4-deoxy-L-arabinose (UDP-L-Ara4N) to form UDP-L-4-formamido-arabinose (UDP-L-Ara4FN). The modified arabinose is attached to lipid A and is required for resistance to polymyxin and cationic antimicrobial peptides. The polypeptide is Bifunctional polymyxin resistance protein ArnA (Enterobacter sp. (strain 638)).